The chain runs to 230 residues: Cell division ATP-binding protein FtsE (230 aa).

Residues 3 to 228 (ITLDHVTKQY…RDEQRGVYGM (226 aa)) enclose the ABC transporter domain. 37–44 (GPSGSGKS) contacts ATP.

The protein belongs to the ABC transporter superfamily. Homodimer. Forms a membrane-associated complex with FtsX.

The protein resides in the cell membrane. Functionally, part of the ABC transporter FtsEX involved in cellular division. Has ATPase activity. The polypeptide is Cell division ATP-binding protein FtsE (Mycobacterium tuberculosis (strain ATCC 25618 / H37Rv)).